Consider the following 227-residue polypeptide: Ribosomal RNA large subunit methyltransferase E (227 aa).

S-adenosyl-L-methionine contacts are provided by Gly-78, Trp-80, Asp-103, Asp-119, and Asp-143. Residue Lys-183 is the Proton acceptor of the active site.

This sequence belongs to the class I-like SAM-binding methyltransferase superfamily. RNA methyltransferase RlmE family.

It is found in the cytoplasm. The catalysed reaction is uridine(2552) in 23S rRNA + S-adenosyl-L-methionine = 2'-O-methyluridine(2552) in 23S rRNA + S-adenosyl-L-homocysteine + H(+). Specifically methylates the uridine in position 2552 of 23S rRNA at the 2'-O position of the ribose in the fully assembled 50S ribosomal subunit. In Rickettsia bellii (strain RML369-C), this protein is Ribosomal RNA large subunit methyltransferase E.